A 765-amino-acid polypeptide reads, in one-letter code: LPS-assembly protein LptD (765 aa).

Residues 1–18 (MQIRYFLALSLLPQVVLA) form the signal peptide.

The protein belongs to the LptD family. Component of the lipopolysaccharide transport and assembly complex. Interacts with LptE and LptA.

It localises to the cell outer membrane. Together with LptE, is involved in the assembly of lipopolysaccharide (LPS) at the surface of the outer membrane. The protein is LPS-assembly protein LptD of Shewanella sp. (strain ANA-3).